Here is a 436-residue protein sequence, read N- to C-terminus: MKCAVAILLVCLTLQQAAYGFLYNEEVKTEFQRRKQSLEEAGESLKQMGQNLQDNMQRSLAEGQEALQKHIKNLQQSMLSQKEALRNRGEALRETVGERLESMQNQGKDWMKKMQEGRETLQKKLGEQVETFNQTFQAGRLAIAKKVLEGSETMRKTIQNTTQSLQDKAEKVQETAGKNVEALKLIARKNALSLKESLDTLRENSVEENMQALRNFLPSQSEAMDLPKEKLQELMASIQNNTGLFQESWGQEKEKMKEMLRGLKRKVGERTEDMKRKMKARKEELEAEFQSRGDEAVQTVMEIRNVTIKHLREAGKKIKEIEEKIASLLPNSCLDFLRSKALKMGVKIVVQDLKSVFRMGWLRVPETFEKEEEIAPSTEEDGSEELEADSYDSKVGGESPISQRTEERQGAEERSRLRRRRAAVLRRMFGQWSRKS.

The first 20 residues, 1 to 20, serve as a signal peptide directing secretion; the sequence is MKCAVAILLVCLTLQQAAYG. Coiled coils occupy residues 25-87, 154-207, and 247-329; these read EEVK…ALRN, MRKT…NSVE, and ESWG…ASLL. The segment covering 371-390 has biased composition (acidic residues); it reads EEEIAPSTEEDGSEELEADS. Positions 371–419 are disordered; the sequence is EEEIAPSTEEDGSEELEADSYDSKVGGESPISQRTEERQGAEERSRLRR. Over residues 404–415 the composition is skewed to basic and acidic residues; that stretch reads RTEERQGAEERS.

Component of the acid-insoluble organic matrix of the aragonitic skeleton (at protein level).

Its subcellular location is the secreted. This is an uncharacterized protein from Acropora millepora (Staghorn coral).